The following is a 282-amino-acid chain: RNA-4 uncharacterized 31.9 kDa protein (282 aa).

This Beta macrocarpa (Beet) protein is RNA-4 uncharacterized 31.9 kDa protein.